The primary structure comprises 565 residues: Formate--tetrahydrofolate ligase (565 aa).

ATP is bound at residue 67–74 (TPLGEGKT).

Belongs to the formate--tetrahydrofolate ligase family.

The catalysed reaction is (6S)-5,6,7,8-tetrahydrofolate + formate + ATP = (6R)-10-formyltetrahydrofolate + ADP + phosphate. Its pathway is one-carbon metabolism; tetrahydrofolate interconversion. This chain is Formate--tetrahydrofolate ligase, found in Saccharopolyspora erythraea (strain ATCC 11635 / DSM 40517 / JCM 4748 / NBRC 13426 / NCIMB 8594 / NRRL 2338).